Reading from the N-terminus, the 129-residue chain is Cocaine- and amphetamine-regulated transcript protein (129 aa).

Positions 1 to 27 are cleaved as a signal peptide; sequence MESSRLRLLPVLGAALLLLLPLLGAGA. Phosphotyrosine is present on Tyr41. Ser48 carries the phosphoserine modification. Intrachain disulfides connect Cys95-Cys113, Cys101-Cys121, and Cys115-Cys128.

The protein belongs to the CART family. As to expression, neuroendocrine tissues. Predominantly expressed in the hypothalamus, pituitary, and longitudinal muscle-myenteric plexus. Abundant expression is also seen in the midbrain/thalamus and eye. A lower level expression is seen in the other brain regions and adrenal.

It localises to the secreted. In terms of biological role, satiety factor closely associated with the actions of leptin and neuropeptide y; this anorectic peptide inhibits both normal and starvation-induced feeding and completely blocks the feeding response induced by neuropeptide Y and regulated by leptin in the hypothalamus. The chain is Cocaine- and amphetamine-regulated transcript protein (Cartpt) from Rattus norvegicus (Rat).